A 95-amino-acid chain; its full sequence is Aspartyl/glutamyl-tRNA(Asn/Gln) amidotransferase subunit C (95 aa).

Belongs to the GatC family. As to quaternary structure, heterotrimer of A, B and C subunits.

It carries out the reaction L-glutamyl-tRNA(Gln) + L-glutamine + ATP + H2O = L-glutaminyl-tRNA(Gln) + L-glutamate + ADP + phosphate + H(+). It catalyses the reaction L-aspartyl-tRNA(Asn) + L-glutamine + ATP + H2O = L-asparaginyl-tRNA(Asn) + L-glutamate + ADP + phosphate + 2 H(+). Functionally, allows the formation of correctly charged Asn-tRNA(Asn) or Gln-tRNA(Gln) through the transamidation of misacylated Asp-tRNA(Asn) or Glu-tRNA(Gln) in organisms which lack either or both of asparaginyl-tRNA or glutaminyl-tRNA synthetases. The reaction takes place in the presence of glutamine and ATP through an activated phospho-Asp-tRNA(Asn) or phospho-Glu-tRNA(Gln). The polypeptide is Aspartyl/glutamyl-tRNA(Asn/Gln) amidotransferase subunit C (Chromobacterium violaceum (strain ATCC 12472 / DSM 30191 / JCM 1249 / CCUG 213 / NBRC 12614 / NCIMB 9131 / NCTC 9757 / MK)).